Reading from the N-terminus, the 249-residue chain is Ribonuclease 3 (249 aa).

Positions V21 to G149 constitute an RNase III domain. E62 serves as a coordination point for Mg(2+). D66 is an active-site residue. Mg(2+) contacts are provided by D135 and E138. E138 is an active-site residue. Residues D176–D244 enclose the DRBM domain.

It belongs to the ribonuclease III family. Homodimer. Mg(2+) is required as a cofactor.

The protein localises to the cytoplasm. The catalysed reaction is Endonucleolytic cleavage to 5'-phosphomonoester.. Functionally, digests double-stranded RNA. Involved in the processing of primary rRNA transcript to yield the immediate precursors to the large and small rRNAs (23S and 16S). Processes some mRNAs, and tRNAs when they are encoded in the rRNA operon. Processes pre-crRNA and tracrRNA of type II CRISPR loci if present in the organism. The polypeptide is Ribonuclease 3 (Corynebacterium diphtheriae (strain ATCC 700971 / NCTC 13129 / Biotype gravis)).